Here is a 473-residue protein sequence, read N- to C-terminus: 3-isopropylmalate dehydratase large subunit (473 aa).

The [4Fe-4S] cluster site is built by C353, C414, and C417.

Belongs to the aconitase/IPM isomerase family. LeuC type 1 subfamily. In terms of assembly, heterodimer of LeuC and LeuD. [4Fe-4S] cluster is required as a cofactor.

It catalyses the reaction (2R,3S)-3-isopropylmalate = (2S)-2-isopropylmalate. It participates in amino-acid biosynthesis; L-leucine biosynthesis; L-leucine from 3-methyl-2-oxobutanoate: step 2/4. In terms of biological role, catalyzes the isomerization between 2-isopropylmalate and 3-isopropylmalate, via the formation of 2-isopropylmaleate. This is 3-isopropylmalate dehydratase large subunit from Cellvibrio japonicus (strain Ueda107) (Pseudomonas fluorescens subsp. cellulosa).